The chain runs to 192 residues: Natural cytotoxicity triggering receptor 3 (192 aa).

An N-terminal signal peptide occupies residues M1 to A18. The Ig-like domain occupies I19–V126. The Extracellular portion of the chain corresponds to I19 to S147. A disulfide bridge links C39 with C108. N-linked (GlcNAc...) asparagine glycosylation is found at N42 and N121. A helical membrane pass occupies residues L148–I168. Over Y169 to F192 the chain is Cytoplasmic.

It belongs to the natural cytotoxicity receptor (NCR) family. In terms of assembly, homodimer in the unliganted form. Interacts with CD3Z. Interacts with and is activated by binding to NCR3LG1. Interacts with and is activated by binding to BAG6. Interacts with and is inhibited by binding to LGALS3.

It localises to the cell membrane. Functionally, cell membrane receptor of natural killer/NK cells that is activated by binding of extracellular ligands including BAG6 and NCR3LG1. Stimulates NK cells cytotoxicity toward neighboring cells producing these ligands. It controls, for instance, NK cells cytotoxicity against tumor cells. Engagement of NCR3 by BAG6 also promotes myeloid dendritic cells (DC) maturation, both through killing DCs that did not acquire a mature phenotype, and inducing the release by NK cells of TNFA and IFNG that promote DC maturation. The sequence is that of Natural cytotoxicity triggering receptor 3 (Ncr3) from Rattus norvegicus (Rat).